Consider the following 92-residue polypeptide: Cell division protein FtsL (92 aa).

The Cytoplasmic portion of the chain corresponds to 1 to 3; it reads MGR. A helical membrane pass occupies residues 4-21; that stretch reads ISLIVAALLMLSAISLVT. The Periplasmic segment spans residues 22 to 92; the sequence is SRYQSRQLFI…YMNQPAGGAQ (71 aa).

The protein belongs to the FtsL family. Part of a complex composed of FtsB, FtsL and FtsQ.

It localises to the cell inner membrane. Its function is as follows. Essential cell division protein. May link together the upstream cell division proteins, which are predominantly cytoplasmic, with the downstream cell division proteins, which are predominantly periplasmic. The protein is Cell division protein FtsL of Bordetella pertussis (strain Tohama I / ATCC BAA-589 / NCTC 13251).